The following is a 393-amino-acid chain: Fasciculation and elongation protein zeta-1 (393 aa).

The segment at 1–41 is disordered; the sequence is MEAPLVSLDEEFEDIRPCCTEDPEEKPQSLYGTSPHHLEDP. Position 58 is a phosphoserine (Ser-58). A disordered region spans residues 130–154; that stretch reads NGNSSDTEIHEKEEEDEFIEKSEND. Residues 231-299 adopt a coiled-coil conformation; that stretch reads SELTELLDQV…KKRRKEKGLS (69 aa). A phosphoserine mark is found at Ser-299 and Ser-317.

It belongs to the zygin family. In terms of assembly, homodimer. Interacts with UBE4B and SAP30L. Interacts with SCOC and ULK1; SCOC interferes with ULK1-binding to FEZ1. Directly interacts with SCOC and UVRAG. Stabilizes the interaction between SCOC and UVRAG during amino acid starvation. Interacts with the NH2-terminal variable region (V1) of PKC zeta and weakly with that of PKC epsilon. Phosphorylated by protein kinase C zeta; which enhances interaction with UBE4B and polyubiquitination. Post-translationally, polyubiquitinated in a UBE4B-dependent manner; which does not lead to proteasomal degradation and may be important for neurogenic activity. Polyubiquitin linkage seems to be mainly through Lys-26. As to expression, brain.

The protein localises to the cytoplasm. The protein resides in the cytoskeleton. It is found in the microtubule organizing center. Its subcellular location is the centrosome. It localises to the cell membrane. Functionally, may be involved in axonal outgrowth as component of the network of molecules that regulate cellular morphology and axon guidance machinery. May participate in the transport of mitochondria and other cargos along microtubules. The chain is Fasciculation and elongation protein zeta-1 (Fez1) from Rattus norvegicus (Rat).